Reading from the N-terminus, the 213-residue chain is Orotate phosphoribosyltransferase (213 aa).

K26 contributes to the 5-phospho-alpha-D-ribose 1-diphosphate binding site. 34–35 (FF) contacts orotate. 5-phospho-alpha-D-ribose 1-diphosphate is bound by residues 72–73 (YK), R99, K100, K103, H105, and 124–132 (DDVITAGTA). The orotate site is built by T128 and R156.

This sequence belongs to the purine/pyrimidine phosphoribosyltransferase family. PyrE subfamily. Homodimer. It depends on Mg(2+) as a cofactor.

It catalyses the reaction orotidine 5'-phosphate + diphosphate = orotate + 5-phospho-alpha-D-ribose 1-diphosphate. The protein operates within pyrimidine metabolism; UMP biosynthesis via de novo pathway; UMP from orotate: step 1/2. In terms of biological role, catalyzes the transfer of a ribosyl phosphate group from 5-phosphoribose 1-diphosphate to orotate, leading to the formation of orotidine monophosphate (OMP). The protein is Orotate phosphoribosyltransferase of Klebsiella pneumoniae (strain 342).